The primary structure comprises 459 residues: Ribulose bisphosphate carboxylase large chain (459 aa).

Lys4 carries the N6,N6,N6-trimethyllysine modification. The substrate site is built by Asn113 and Thr163. Catalysis depends on Lys165, which acts as the Proton acceptor. Lys167 lines the substrate pocket. Residues Lys191, Asp193, and Glu194 each coordinate Mg(2+). N6-carboxylysine is present on Lys191. Residue His284 is the Proton acceptor of the active site. Substrate is bound by residues Arg285, His317, and Ser369.

Belongs to the RuBisCO large chain family. Type I subfamily. As to quaternary structure, heterohexadecamer of 8 large chains and 8 small chains; disulfide-linked. The disulfide link is formed within the large subunit homodimers. Requires Mg(2+) as cofactor. The disulfide bond which can form in the large chain dimeric partners within the hexadecamer appears to be associated with oxidative stress and protein turnover.

It localises to the plastid. Its subcellular location is the chloroplast. It carries out the reaction 2 (2R)-3-phosphoglycerate + 2 H(+) = D-ribulose 1,5-bisphosphate + CO2 + H2O. The catalysed reaction is D-ribulose 1,5-bisphosphate + O2 = 2-phosphoglycolate + (2R)-3-phosphoglycerate + 2 H(+). Functionally, ruBisCO catalyzes two reactions: the carboxylation of D-ribulose 1,5-bisphosphate, the primary event in carbon dioxide fixation, as well as the oxidative fragmentation of the pentose substrate in the photorespiration process. Both reactions occur simultaneously and in competition at the same active site. This is Ribulose bisphosphate carboxylase large chain from Nyssa ogeche (Ogeechee tupelo).